The sequence spans 355 residues: Beta-porphyranase C (355 aa).

An N-terminal signal peptide occupies residues methionine 1 to alanine 18. Cysteine 19 carries the N-palmitoyl cysteine lipid modification. The S-diacylglycerol cysteine moiety is linked to residue cysteine 19. Positions serine 22–aspartate 72 are disordered. Residues glutamine 39 to glycine 54 show a composition bias toward basic and acidic residues. One can recognise a GH16 domain in the interval aspartate 71–leucine 355. Substrate contacts are provided by tryptophan 110, glutamate 208, and glutamate 213. Residue glutamate 208 is the Nucleophile of the active site. The Proton donor role is filled by glutamate 213.

The protein belongs to the glycosyl hydrolase 16 family.

The protein localises to the cell outer membrane. It carries out the reaction Hydrolysis of beta-D-galactopyranose-(1-&gt;4)-alpha-L-galactopyranose-6-sulfate linkages in porphyran.. Its function is as follows. Cleaves the sulfated polysaccharide porphyran at the (1-&gt;4) linkages between beta-D-galactopyranose and alpha-L-galactopyranose-6-sulfate, forming mostly the disaccharide alpha-L-galactopyranose-6-sulfate-(1-&gt;3)-beta-D-galactose. The sequence is that of Beta-porphyranase C (porC) from Zobellia galactanivorans (strain DSM 12802 / CCUG 47099 / CIP 106680 / NCIMB 13871 / Dsij).